Reading from the N-terminus, the 391-residue chain is Cdc42 effector protein 1 (391 aa).

A phosphoserine mark is found at serine 19 and serine 27. Position 34 is a phosphothreonine (threonine 34). The 15-residue stretch at 38–52 (ISHPLGDFRHTMHVG) folds into the CRIB domain. The residue at position 39 (serine 39) is a Phosphoserine. At arginine 53 the chain carries Omega-N-methylarginine. A phosphoserine mark is found at serine 65, serine 73, serine 77, serine 101, serine 113, serine 121, and serine 139. The disordered stretch occupies residues 163–189 (ISRLPRSEKPHDRDRDGSFPSEPGLRR). The span at 167–179 (PRSEKPHDRDRDG) shows a compositional bias: basic and acidic residues. 4 positions are modified to phosphoserine: serine 180, serine 190, serine 192, and serine 195. A run of 8 repeats spans residues 220–226 (PAAETPA), 227–233 (PAANPPA), 234–240 (PTANPTG), 241–247 (PAANPPA), 248–254 (TTANPPA), 255–261 (PAANPSA), 262–268 (PAATPTG), and 269–275 (PAANPPA). The tract at residues 220–275 (PAAETPAPAANPPAPTANPTGPAANPPATTANPPAPAANPSAPAATPTGPAANPPA) is 8 X 7 AA tandem repeats of [PT]-[AT]-A-[ENT]-[PT]-[PTS]-[AG]. The segment at 221–338 (AAETPAPAAN…HHYPEMDARQ (118 aa)) is disordered. Over residues 236-270 (ANPTGPAANPPATTANPPAPAANPSAPAATPTGPA) the composition is skewed to low complexity. Residue serine 303 is modified to Phosphoserine. Over residues 327 to 338 (GGHHYPEMDARQ) the composition is skewed to basic and acidic residues. Phosphoserine occurs at positions 350 and 353. A disordered region spans residues 354–391 (LDEEWRAPQAGSRTPVPSTVQANTFEFADAEEDDEVKV). Over residues 364 to 377 (GSRTPVPSTVQANT) the composition is skewed to polar residues. Positions 381–391 (ADAEEDDEVKV) are enriched in acidic residues.

The protein belongs to the BORG/CEP family. As to quaternary structure, interacts with RHOQ and CDC42, in a GTP-dependent manner. Endothelial and bone marrow stromal cells.

It localises to the endomembrane system. The protein resides in the cytoplasm. It is found in the cytoskeleton. Its function is as follows. Probably involved in the organization of the actin cytoskeleton. Induced membrane extensions in fibroblasts. The protein is Cdc42 effector protein 1 (CDC42EP1) of Homo sapiens (Human).